Consider the following 161-residue polypeptide: Decarboxylase (161 aa).

In terms of domain architecture, EthD spans glutamine 29–threonine 131.

This sequence belongs to the tpcK family.

It carries out the reaction atrochrysone carboxylate + H(+) = atrochrysone + CO2. The protein operates within secondary metabolite biosynthesis. Decarboxylase; part of the gene cluster that mediates the biosynthesis of monodictyphenone, a prenyl xanthone derivative. The pathway begins with the synthesis of atrochrysone thioester by the polyketide synthase (PKS) mdpG. The atrochrysone carboxyl ACP thioesterase mdpF then breaks the thioester bond and releases the atrochrysone carboxylic acid from mdpG. The atrochrysone carboxylic acid is then converted to atrochrysone which is further transformed into emodin anthrone by mdpH-1 and mdpH-2. Emodin is further modified to yield monodictyphenone via several steps involving mdpB, mdpC mdpJ, mdpK and mdpL. These enzymes with xptA, xptB and xptC are also proposed to be involved in the synthesis of shamixanthone from emodin. Especially, direct reduction of emodin by the short chain dehydrogenase mdpC followed by dehydration catalyzed by the scytalone dehydratase-like protein mdpB gives loss of oxygen and formation of chrysophanol intermediate in two simple steps. The polypeptide is Decarboxylase (Emericella nidulans (strain FGSC A4 / ATCC 38163 / CBS 112.46 / NRRL 194 / M139) (Aspergillus nidulans)).